The chain runs to 92 residues: Small ribosomal subunit protein uS19 (92 aa).

This sequence belongs to the universal ribosomal protein uS19 family.

Functionally, protein S19 forms a complex with S13 that binds strongly to the 16S ribosomal RNA. The polypeptide is Small ribosomal subunit protein uS19 (Shewanella amazonensis (strain ATCC BAA-1098 / SB2B)).